The primary structure comprises 318 residues: MTVITIAKRGLPKLTTSTSSTTTASSSSTITSVASSSSSLPLLSNSTSSSIIPSITPPSRNGNPYILDSGDMPNGTVFIXVGGIAGVIFLAILLWWVITTYSSHRLTRSVQDYESKMFSTQHTQFYGDSPYMDYPAKENFQDQVHISESDISPGNKDESVKDALVSHTNNEKPFLSNFERPLSSLVSESNRNSLFISPTGDILYKTRLSKLYQESPRLLQKPVIMTSDNVSTNSLVSTISSSSASSLDNGNEKEVGEDIRKPAKIASSPSRKLLNSPESDGSVNRNHSKGNLLVVQSKRKPTPSTYLEHMLEGKEQDE.

The chain crosses the membrane as a helical span at residues 78–98 (FIXVGGIAGVIFLAILLWWVI). Ser129 bears the Phosphoserine mark. The span at 238 to 247 (TISSSSASSL) shows a compositional bias: low complexity. The tract at residues 238–318 (TISSSSASSL…HMLEGKEQDE (81 aa)) is disordered. Residues 250 to 261 (GNEKEVGEDIRK) show a composition bias toward basic and acidic residues. The span at 276–285 (SPESDGSVNR) shows a compositional bias: polar residues. A phosphoserine mark is found at Ser279, Ser282, and Ser288. A compositionally biased stretch (basic and acidic residues) spans 309 to 318 (HMLEGKEQDE). Lys314 is covalently cross-linked (Glycyl lysine isopeptide (Lys-Gly) (interchain with G-Cter in ubiquitin)).

This sequence belongs to the PRM5 family.

It localises to the membrane. This Saccharomyces cerevisiae (strain FostersO) (Baker's yeast) protein is Pheromone-regulated membrane protein 5 (PRM5).